We begin with the raw amino-acid sequence, 872 residues long: Alanine--tRNA ligase (872 aa).

His-563, His-567, Cys-665, and His-669 together coordinate Zn(2+).

Belongs to the class-II aminoacyl-tRNA synthetase family. The cofactor is Zn(2+).

The protein resides in the cytoplasm. It carries out the reaction tRNA(Ala) + L-alanine + ATP = L-alanyl-tRNA(Ala) + AMP + diphosphate. Catalyzes the attachment of alanine to tRNA(Ala) in a two-step reaction: alanine is first activated by ATP to form Ala-AMP and then transferred to the acceptor end of tRNA(Ala). Also edits incorrectly charged Ser-tRNA(Ala) and Gly-tRNA(Ala) via its editing domain. This is Alanine--tRNA ligase from Bacteroides thetaiotaomicron (strain ATCC 29148 / DSM 2079 / JCM 5827 / CCUG 10774 / NCTC 10582 / VPI-5482 / E50).